Consider the following 133-residue polypeptide: Endoribonuclease YbeY (133 aa).

3 residues coordinate Zn(2+): histidine 105, histidine 109, and histidine 115.

This sequence belongs to the endoribonuclease YbeY family. It depends on Zn(2+) as a cofactor.

The protein resides in the cytoplasm. Single strand-specific metallo-endoribonuclease involved in late-stage 70S ribosome quality control and in maturation of the 3' terminus of the 16S rRNA. This chain is Endoribonuclease YbeY, found in Lawsonia intracellularis (strain PHE/MN1-00).